Here is a 66-residue protein sequence, read N- to C-terminus: Photosystem II reaction center protein H (66 aa).

A helical membrane pass occupies residues 27–47 (GAVPVMTVIGLLLLVFLVILL).

The protein belongs to the PsbH family. As to quaternary structure, PSII is composed of 1 copy each of membrane proteins PsbA, PsbB, PsbC, PsbD, PsbE, PsbF, PsbH, PsbI, PsbJ, PsbK, PsbL, PsbM, PsbT, PsbX, PsbY, Psb30/Ycf12, peripheral proteins PsbO, CyanoQ (PsbQ), PsbU, PsbV and a large number of cofactors. It forms dimeric complexes.

Its subcellular location is the cellular thylakoid membrane. Its function is as follows. One of the components of the core complex of photosystem II (PSII), required for its stability and/or assembly. PSII is a light-driven water:plastoquinone oxidoreductase that uses light energy to abstract electrons from H(2)O, generating O(2) and a proton gradient subsequently used for ATP formation. It consists of a core antenna complex that captures photons, and an electron transfer chain that converts photonic excitation into a charge separation. The sequence is that of Photosystem II reaction center protein H from Prochlorococcus marinus (strain MIT 9215).